The sequence spans 57 residues: uncharacterized protein (57 aa).

A helical membrane pass occupies residues 10–27; it reads FGLLWLIIGSEAFHLNAL. The stretch at 28–55 forms a coiled coil; sequence KQDHLERMKQYDAKIRLAKHEFDDTSNE.

It localises to the membrane. This is an uncharacterized protein from Schizosaccharomyces pombe (strain 972 / ATCC 24843) (Fission yeast).